Reading from the N-terminus, the 973-residue chain is DENN domain-containing protein C297.05 (973 aa).

Positions 69-79 are enriched in polar residues; it reads AHHNTTGSNSV. Positions 69–136 are disordered; it reads AHHNTTGSNS…YHSRKPYSEP (68 aa). Phosphoserine occurs at positions 134 and 318. Residues 169–427 form the uDENN domain; it reads ALPLFAATHP…NICCDVPLPP (259 aa). Residues 449-586 form the cDENN domain; that stretch reads VNEIPGWNDV…LRSKLQAHLK (138 aa). In terms of domain architecture, dDENN spans 588–919; that stretch reads AAPLHDKFYV…DRCELDLNDP (332 aa). A disordered region spans residues 693–713; sequence RNFSSPPFTRPASPSSSKFRF. Position 726 is a phosphoserine (S726). The disordered stretch occupies residues 729–750; the sequence is SPYSVPELRSSESNQNKAGSIN. Positions 739–750 are enriched in polar residues; sequence SESNQNKAGSIN.

It localises to the cytoplasm. Its subcellular location is the nucleus. This Schizosaccharomyces pombe (strain 972 / ATCC 24843) (Fission yeast) protein is DENN domain-containing protein C297.05.